A 402-amino-acid polypeptide reads, in one-letter code: Pyridinium-3,5-bisthiocarboxylic acid mononucleotide nickel insertion protein (402 aa).

It belongs to the LarC family.

The catalysed reaction is Ni(II)-pyridinium-3,5-bisthiocarboxylate mononucleotide = pyridinium-3,5-bisthiocarboxylate mononucleotide + Ni(2+). Its function is as follows. Involved in the biosynthesis of a nickel-pincer cofactor ((SCS)Ni(II) pincer complex). Binds Ni(2+), and functions in nickel delivery to pyridinium-3,5-bisthiocarboxylic acid mononucleotide (P2TMN), to form the mature cofactor. Is thus probably required for the activation of nickel-pincer cofactor-dependent enzymes. In Desulfitobacterium hafniense (strain DSM 10664 / DCB-2), this protein is Pyridinium-3,5-bisthiocarboxylic acid mononucleotide nickel insertion protein.